We begin with the raw amino-acid sequence, 343 residues long: Anthranilate phosphoribosyltransferase (343 aa).

5-phospho-alpha-D-ribose 1-diphosphate-binding positions include Gly-84, 87 to 88 (GD), Thr-92, 94 to 97 (NIST), 112 to 120 (KHGNRGVSS), and Ser-124. Gly-84 contacts anthranilate. Ser-96 provides a ligand contact to Mg(2+). Asn-115 is a binding site for anthranilate. Residue Arg-170 participates in anthranilate binding. Residues Asp-229 and Glu-230 each contribute to the Mg(2+) site.

The protein belongs to the anthranilate phosphoribosyltransferase family. Homodimer. The cofactor is Mg(2+).

It catalyses the reaction N-(5-phospho-beta-D-ribosyl)anthranilate + diphosphate = 5-phospho-alpha-D-ribose 1-diphosphate + anthranilate. It functions in the pathway amino-acid biosynthesis; L-tryptophan biosynthesis; L-tryptophan from chorismate: step 2/5. In terms of biological role, catalyzes the transfer of the phosphoribosyl group of 5-phosphorylribose-1-pyrophosphate (PRPP) to anthranilate to yield N-(5'-phosphoribosyl)-anthranilate (PRA). The protein is Anthranilate phosphoribosyltransferase of Burkholderia ambifaria (strain ATCC BAA-244 / DSM 16087 / CCUG 44356 / LMG 19182 / AMMD) (Burkholderia cepacia (strain AMMD)).